A 219-amino-acid chain; its full sequence is Uracil-DNA glycosylase (219 aa).

Aspartate 61 acts as the Proton acceptor in catalysis.

This sequence belongs to the uracil-DNA glycosylase (UDG) superfamily. UNG family.

The protein resides in the cytoplasm. The catalysed reaction is Hydrolyzes single-stranded DNA or mismatched double-stranded DNA and polynucleotides, releasing free uracil.. Excises uracil residues from the DNA which can arise as a result of misincorporation of dUMP residues by DNA polymerase or due to deamination of cytosine. The chain is Uracil-DNA glycosylase from Exiguobacterium sibiricum (strain DSM 17290 / CCUG 55495 / CIP 109462 / JCM 13490 / 255-15).